Consider the following 121-residue polypeptide: MNSSYFPGVLGVRWVHTNRKLQKRKEEHGAFQDSLHFMIPAAETKDLGASVTVGNSLTRAFRQVDRICQRNNVPRLFRSQRFYEKPSEKRSRVRSERHRARFRAGIVRLVNLAKNMRRWGY.

A mitochondrion-targeting transit peptide spans 1-14; the sequence is MNSSYFPGVLGVRW.

It belongs to the bacterial ribosomal protein bS21 family. As to quaternary structure, component of the mitochondrial small ribosomal subunit (mt-SSU). Mature yeast 74S mitochondrial ribosomes consist of a small (37S) and a large (54S) subunit. The 37S small subunit contains a 15S ribosomal RNA (15S mt-rRNA) and at least 32 different proteins. The 54S large subunit contains a 21S rRNA (21S mt-rRNA) and at least 45 different proteins.

The protein localises to the mitochondrion. In terms of biological role, component of the mitochondrial ribosome (mitoribosome), a dedicated translation machinery responsible for the synthesis of mitochondrial genome-encoded proteins, including at least some of the essential transmembrane subunits of the mitochondrial respiratory chain. The mitoribosomes are attached to the mitochondrial inner membrane and translation products are cotranslationally integrated into the membrane. This is Small ribosomal subunit protein bS21m (mrp21) from Schizosaccharomyces pombe (strain 972 / ATCC 24843) (Fission yeast).